The following is a 336-amino-acid chain: NADH-quinone oxidoreductase subunit H (336 aa).

8 helical membrane passes run 12 to 32, 84 to 104, 118 to 138, 156 to 176, 193 to 213, 247 to 267, 274 to 294, and 313 to 333; these read FLKIVIVFSLALGIGAYLTWF, VVMALVPSILLLTIIPFGPGF, VNIALLLAFAFGSLSVYGTIF, AAVVIAYEVVLGFSVLGVILL, GVWFIFYQPVAFILYLFCMLA, LAEWYVNVIALSAIAVVLFFG, IFGPLSPYFWFVFKTFALVFF, and IAWKILLPIAILNVIITAVVV.

It belongs to the complex I subunit 1 family. NDH-1 is composed of 14 different subunits. Subunits NuoA, H, J, K, L, M, N constitute the membrane sector of the complex.

The protein localises to the cell inner membrane. The catalysed reaction is a quinone + NADH + 5 H(+)(in) = a quinol + NAD(+) + 4 H(+)(out). Its function is as follows. NDH-1 shuttles electrons from NADH, via FMN and iron-sulfur (Fe-S) centers, to quinones in the respiratory chain. The immediate electron acceptor for the enzyme in this species is believed to be ubiquinone. Couples the redox reaction to proton translocation (for every two electrons transferred, four hydrogen ions are translocated across the cytoplasmic membrane), and thus conserves the redox energy in a proton gradient. This subunit may bind ubiquinone. The sequence is that of NADH-quinone oxidoreductase subunit H from Aquifex aeolicus (strain VF5).